Here is a 463-residue protein sequence, read N- to C-terminus: MEKALSKTWSERFDKGLNPFIEKFNASIEFDICLLEEDLDGSIAHARMLGIQGIITKEEALRLENGLQQIRKEASDGLFHPVISDEDVHFAVEKKLIDLIGPVGKKLHTGRSRNDQVGTDLRLWLRKRIDEIDMDLVRLQKSLFLLAEENLYTLIPGYTHLQRAQPLSLAHHLLAYIEMAQRDRNRLKDVRKRVNISPLGAAALAGTSISISRKITSSELHFQGIYSNSLDAVSDRDFVVEFLGASSLIMAHLSRLSEEVILWASEEFAFIQLTDRCATGSSLMPQKKNPDVPELVRGKSGRVFGHLQAMLTMIKGLPLAYNKDFQEDKEAIFDSVKTVKNSLIAISILFEEGLIFRKERLNQAVSSDFSNATDVADYLVAKDIPFREAYQLVGRIVKTSLEEGILLKDIPLERWKTFHKFFEKDIYEKLLPSSVVESRLSAGGTGFERVQEQLLSWREKLFN.

Belongs to the lyase 1 family. Argininosuccinate lyase subfamily.

It localises to the cytoplasm. It catalyses the reaction 2-(N(omega)-L-arginino)succinate = fumarate + L-arginine. It participates in amino-acid biosynthesis; L-arginine biosynthesis; L-arginine from L-ornithine and carbamoyl phosphate: step 3/3. The chain is Argininosuccinate lyase from Prochlorococcus marinus (strain NATL2A).